The sequence spans 335 residues: Coiled-coil domain-containing protein 68 (335 aa).

Positions 101-305 form a coiled coil; sequence QLLEMNKENE…KTQVALSSET (205 aa).

In terms of assembly, interacts with CEP170. As to expression, expressed in bone marrow, colon, small intestine, spleen, testis, trachea and cutaneous T-cell lymphoma (CTCL).

It is found in the cytoplasm. The protein resides in the cytoskeleton. Its subcellular location is the microtubule organizing center. It localises to the centrosome. The protein localises to the centriole. In terms of biological role, centriolar protein required for centriole subdistal appendage assembly and microtubule anchoring in interphase cells. Together with CCDC120, cooperate with subdistal appendage components ODF2, NIN and CEP170 for hierarchical subdistal appendage assembly. This chain is Coiled-coil domain-containing protein 68 (CCDC68), found in Homo sapiens (Human).